A 404-amino-acid chain; its full sequence is Tryptophan synthase beta chain (404 aa).

Position 90 is an N6-(pyridoxal phosphate)lysine (Lys-90).

It belongs to the TrpB family. In terms of assembly, tetramer of two alpha and two beta chains. The cofactor is pyridoxal 5'-phosphate.

It catalyses the reaction (1S,2R)-1-C-(indol-3-yl)glycerol 3-phosphate + L-serine = D-glyceraldehyde 3-phosphate + L-tryptophan + H2O. The protein operates within amino-acid biosynthesis; L-tryptophan biosynthesis; L-tryptophan from chorismate: step 5/5. The beta subunit is responsible for the synthesis of L-tryptophan from indole and L-serine. The chain is Tryptophan synthase beta chain (trpB) from Geobacillus stearothermophilus (Bacillus stearothermophilus).